We begin with the raw amino-acid sequence, 100 residues long: MKLTPREKDKLLIFTAALLAERRRARGLKLNYPEAVAFITAALMEAARDGRTVAEVMHYGTTLLTRDDVMDGVPEMIPDIQVEATFPDGTKLVTVHHPIP.

The protein belongs to the urease gamma subunit family. Heterotrimer of UreA (gamma), UreB (beta) and UreC (alpha) subunits. Three heterotrimers associate to form the active enzyme.

Its subcellular location is the cytoplasm. The enzyme catalyses urea + 2 H2O + H(+) = hydrogencarbonate + 2 NH4(+). It functions in the pathway nitrogen metabolism; urea degradation; CO(2) and NH(3) from urea (urease route): step 1/1. The protein is Urease subunit gamma of Burkholderia cenocepacia (strain ATCC BAA-245 / DSM 16553 / LMG 16656 / NCTC 13227 / J2315 / CF5610) (Burkholderia cepacia (strain J2315)).